We begin with the raw amino-acid sequence, 422 residues long: MNKNSGKDYESIQGKIKSKAEIEDSVILDQDTFQGKGEEKTKLDELIRWEAEKNDLLKLIDNVGNDEVFTPVETCQRMLDELFPEDHEVWSNPDLKWLNPCDKNGVFFREIALRLDKGLTKIIPDEYARKKHIMTKMLFSIGLTKFTSLMVRRTLYYCIKANKRKTSEDEGCAIANGARFNNEFGNVVTPYKEHYFGKESKSKNCHFCGTNKNSKYVNSMTEEKYAYDFIHLNSDEYENYFKTNFGVMKFDVIIGNPPYQLSNGSGSDGNGAKAIFQDFVLKAIDLEPKYLAMIIPAKWMISAENIFLNLRDKLKKNKDIKEINIFFDSKDCFPKREIKGGICYFIWQNNYQGKTLINTKFSKKGKSTEIDSSKRNLFVSVLNNTEQIIFRKRIWQDIYTKIDSISASEMKNTHTEREQFRS.

It belongs to the N(4)/N(6)-methyltransferase family.

The enzyme catalyses a 2'-deoxyadenosine in DNA + S-adenosyl-L-methionine = an N(6)-methyl-2'-deoxyadenosine in DNA + S-adenosyl-L-homocysteine + H(+). This is an uncharacterized protein from Mycoplasma pneumoniae (strain ATCC 29342 / M129 / Subtype 1) (Mycoplasmoides pneumoniae).